The primary structure comprises 284 residues: D-tagatose-1,6-bisphosphate aldolase subunit GatY (284 aa).

D82 functions as the Proton donor in the catalytic mechanism. 2 residues coordinate Zn(2+): H83 and H180. Residue G181 coordinates dihydroxyacetone phosphate. H208 contributes to the Zn(2+) binding site. Residues 209–211 (GAS) and 230–233 (NVAT) contribute to the dihydroxyacetone phosphate site.

It belongs to the class II fructose-bisphosphate aldolase family. TagBP aldolase GatY subfamily. As to quaternary structure, forms a complex with GatZ. Zn(2+) serves as cofactor.

The catalysed reaction is D-tagatofuranose 1,6-bisphosphate = D-glyceraldehyde 3-phosphate + dihydroxyacetone phosphate. It participates in carbohydrate metabolism; D-tagatose 6-phosphate degradation; D-glyceraldehyde 3-phosphate and glycerone phosphate from D-tagatose 6-phosphate: step 2/2. In terms of biological role, catalytic subunit of the tagatose-1,6-bisphosphate aldolase GatYZ, which catalyzes the reversible aldol condensation of dihydroxyacetone phosphate (DHAP or glycerone-phosphate) with glyceraldehyde 3-phosphate (G3P) to produce tagatose 1,6-bisphosphate (TBP). Requires GatZ subunit for full activity and stability. Is involved in the catabolism of galactitol. The protein is D-tagatose-1,6-bisphosphate aldolase subunit GatY of Shigella dysenteriae serotype 1 (strain Sd197).